A 152-amino-acid chain; its full sequence is UPF0266 membrane protein YobD (152 aa).

Helical transmembrane passes span 6 to 26, 45 to 65, and 67 to 87; these read LVLI…QFIM, VDSV…VTSH, and AQMT…IFWI.

The protein belongs to the UPF0266 family.

It localises to the cell inner membrane. This Salmonella agona (strain SL483) protein is UPF0266 membrane protein YobD.